Reading from the N-terminus, the 245-residue chain is GSIPFWIALIASFSVFLQGVKVKAPTFEITNKCPYTVWAAAFPGGGKQLAQGQSWSVQPDAGTSTGRIWGRTDCSFDGSGRGTCQSGDCNGTLNCQGDASAPVTLVEYTHNPSMNLDFYDISLLDGFNLPLSITPTSTNPNCKGIITCLSDINSQCPNELKVSGGCLSACVKYNTDDHCCRGANCNQTLYSRFFKEQCPQAYSYAKDDVTSAFTCPSGTDYKIVFCGKSDHIFALYLYITINNEE.

The first 19 residues, 1-19 (GSIPFWIALIASFSVFLQG), serve as a signal peptide directing secretion. 8 disulfides stabilise this stretch: C33/C226, C74/C84, C89/C95, C142/C215, C148/C198, C156/C166, C170/C179, and C180/C185. A glycan (N-linked (GlcNAc...) asparagine) is linked at N90. N186 carries N-linked (GlcNAc...) asparagine glycosylation.

This sequence belongs to the thaumatin family. In terms of tissue distribution, mostly expressed in strobili, and, to a lower extent, in roots of seedlings and saplings.

Its function is as follows. May be involved in disease resistance. The polypeptide is Pathogenesis-related thaumatin-like protein 3.6 (Cryptomeria japonica (Japanese cedar)).